A 432-amino-acid polypeptide reads, in one-letter code: Trigger factor (432 aa).

The 86-residue stretch at 163–248 folds into the PPIase FKBP-type domain; sequence GDIAVIDFEG…LKALNKKELP (86 aa).

It belongs to the FKBP-type PPIase family. Tig subfamily.

It is found in the cytoplasm. The catalysed reaction is [protein]-peptidylproline (omega=180) = [protein]-peptidylproline (omega=0). Its function is as follows. Involved in protein export. Acts as a chaperone by maintaining the newly synthesized protein in an open conformation. Functions as a peptidyl-prolyl cis-trans isomerase. The polypeptide is Trigger factor (Thermoanaerobacter pseudethanolicus (strain ATCC 33223 / 39E) (Clostridium thermohydrosulfuricum)).